A 158-amino-acid polypeptide reads, in one-letter code: Transcription elongation factor GreA (158 aa).

The stretch at 2-70 (ENQKQYPMTQ…IEQDIQRIEH (69 aa)) forms a coiled coil.

The protein belongs to the GreA/GreB family.

Its function is as follows. Necessary for efficient RNA polymerase transcription elongation past template-encoded arresting sites. The arresting sites in DNA have the property of trapping a certain fraction of elongating RNA polymerases that pass through, resulting in locked ternary complexes. Cleavage of the nascent transcript by cleavage factors such as GreA or GreB allows the resumption of elongation from the new 3'terminus. GreA releases sequences of 2 to 3 nucleotides. The protein is Transcription elongation factor GreA of Staphylococcus epidermidis (strain ATCC 35984 / DSM 28319 / BCRC 17069 / CCUG 31568 / BM 3577 / RP62A).